The sequence spans 455 residues: GTPase Der (455 aa).

2 EngA-type G domains span residues 4 to 174 (PIVA…PAGQ) and 183 to 358 (LKIA…SERN). GTP is bound by residues 10–17 (GRPNVGKS), 57–61 (DTAGL), 126–129 (NKAD), 189–196 (GRPNVGKS), 236–240 (DTAGI), and 301–304 (NKWD). The KH-like domain occupies 359–444 (KRVSTSDINN…PIILVFKGRE (86 aa)).

This sequence belongs to the TRAFAC class TrmE-Era-EngA-EngB-Septin-like GTPase superfamily. EngA (Der) GTPase family. Associates with the 50S ribosomal subunit.

Functionally, GTPase that plays an essential role in the late steps of ribosome biogenesis. This chain is GTPase Der, found in Herpetosiphon aurantiacus (strain ATCC 23779 / DSM 785 / 114-95).